Reading from the N-terminus, the 366-residue chain is Alanine racemase (366 aa).

Lys33 serves as the catalytic Proton acceptor; specific for D-alanine. Lys33 bears the N6-(pyridoxal phosphate)lysine mark. A substrate-binding site is contributed by Arg129. The active-site Proton acceptor; specific for L-alanine is Tyr253. Met301 is a substrate binding site.

Belongs to the alanine racemase family. It depends on pyridoxal 5'-phosphate as a cofactor.

The enzyme catalyses L-alanine = D-alanine. The protein operates within amino-acid biosynthesis; D-alanine biosynthesis; D-alanine from L-alanine: step 1/1. Catalyzes the interconversion of L-alanine and D-alanine. May also act on other amino acids. The chain is Alanine racemase (alr) from Xanthomonas oryzae pv. oryzae (strain KACC10331 / KXO85).